Consider the following 308-residue polypeptide: MQEKISKFEDFLTQLQQNITTALEQHETNAAKFISDKWQKPDTPDQKLKGYGNSMIIEGGEIFEKGVVAFSRVHGSELPPFATAKRQELAGKSFIATGLSLVIHPRNPFVPTSHANFRIFIAGADTDNPIWWFGGGFDLTPYYPFEEDAIHWHQTAKNICDKHDKTYYPKFKKWCDEYFYLKHRDEYRGVGGLFFDDLNDKSFDECFNFVTDCANSYLDAYIPIVAQRKNIEYSQKHKDFQLYRRGRYVEFNLVFDRGTIFGLQSGGRTESILSSMPPMATWKYNWQPELGSEEEKVYQYIKPRDWIK.

Ser100 lines the substrate pocket. Residues His104 and His114 each coordinate a divalent metal cation. His114 serves as the catalytic Proton donor. 116–118 (NFR) is a substrate binding site. A divalent metal cation-binding residues include His153 and His183. An important for dimerization region spans residues 248 to 283 (YVEFNLVFDRGTIFGLQSGGRTESILSSMPPMATWK). 266–268 (GGR) lines the substrate pocket.

Belongs to the aerobic coproporphyrinogen-III oxidase family. As to quaternary structure, homodimer. A divalent metal cation serves as cofactor.

The protein resides in the cytoplasm. The enzyme catalyses coproporphyrinogen III + O2 + 2 H(+) = protoporphyrinogen IX + 2 CO2 + 2 H2O. It functions in the pathway porphyrin-containing compound metabolism; protoporphyrin-IX biosynthesis; protoporphyrinogen-IX from coproporphyrinogen-III (O2 route): step 1/1. Its function is as follows. Involved in the heme biosynthesis. Catalyzes the aerobic oxidative decarboxylation of propionate groups of rings A and B of coproporphyrinogen-III to yield the vinyl groups in protoporphyrinogen-IX. This Francisella tularensis subsp. holarctica (strain FTNF002-00 / FTA) protein is Oxygen-dependent coproporphyrinogen-III oxidase.